Reading from the N-terminus, the 113-residue chain is UPF0342 protein SMU_782 (113 aa).

It belongs to the UPF0342 family.

The sequence is that of UPF0342 protein SMU_782 from Streptococcus mutans serotype c (strain ATCC 700610 / UA159).